The sequence spans 626 residues: FAD-binding monooxygenase moxY (626 aa).

The segment covering 1–23 (MAPFLSAHGESASSSSSSSPTPS) has biased composition (low complexity). Residues 1–47 (MAPFLSAHGESASSSSSSSPTPSRHTRNQHVDYSTPGSTGYNIPQNT) are disordered. Over residues 31 to 47 (VDYSTPGSTGYNIPQNT) the composition is skewed to polar residues. Residues 96-99 (TWLE), 108-109 (DI), and Tyr-114 contribute to the FAD site. 106 to 108 (GCD) lines the NADP(+) pocket. Residues 243–249 (SGASSIQ) and 266–267 (RT) each bind NADP(+).

It belongs to the FAD-binding monooxygenase family. It depends on FAD as a cofactor.

Its pathway is mycotoxin biosynthesis. Functionally, FAD-binding monooxygenase; part of the fragmented gene cluster that mediates the biosynthesis of dothistromin (DOTH), a polyketide toxin very similar in structure to the aflatoxin precursor, versicolorin B. The first step of the pathway is the conversion of acetate to norsolorinic acid (NOR) and requires the fatty acid synthase subunits hexA and hexB, as well as the polyketide synthase pksA. PksA combines a hexanoyl starter unit and 7 malonyl-CoA extender units to synthesize the precursor NOR. The hexanoyl starter unit is provided to the acyl-carrier protein (ACP) domain by the fungal fatty acid synthase hexA/hexB. The second step is the conversion of NOR to averantin (AVN) and requires the norsolorinic acid ketoreductase nor1, which catalyzes the dehydration of norsolorinic acid to form (1'S)-averantin. The cytochrome P450 monooxygenase avnA then catalyzes the hydroxylation of AVN to 5'hydroxyaverantin (HAVN). The next step is performed by adhA that transforms HAVN to averufin (AVF). Averufin might then be converted to hydroxyversicolorone by cypX and avfA. Hydroxyversicolorone is further converted versiconal hemiacetal acetate (VHA) by moxY. VHA is then the substrate for the versiconal hemiacetal acetate esterase est1 to yield versiconal (VAL). Versicolorin B synthase vbsA then converts VAL to versicolorin B (VERB) by closing the bisfuran ring. Then, the activity of the versicolorin B desaturase verB leads to versicolorin A (VERA). DotB, a predicted chloroperoxidase, may perform epoxidation of the A-ring of VERA. Alternatively, a cytochrome P450, such as cypX or avnA could catalyze this step. It is also possible that another, uncharacterized, cytochrome P450 enzyme is responsible for this step. Opening of the epoxide could potentially be achieved by the epoxide hydrolase epoA. However, epoA seems not to be required for DOTH biosynthesis, but other epoxide hydrolases may have the ability to complement this hydrolysis. Alternatively, opening of the epoxide ring could be achieved non-enzymatically. The next step is the deoxygenation of ring A to yield the 5,8-dihydroxyanthraquinone which is most likely catalyzed by the NADPH dehydrogenase encoded by ver1. The last stages of DOTH biosynthesis are proposed to involve hydroxylation of the bisfuran. OrdB and norB might have oxidative roles here. An alternative possibility is that cytochrome P450 monoogenases such as avnA and cypX might perform these steps in addition to previously proposed steps. In Dothistroma septosporum (Red band needle blight fungus), this protein is FAD-binding monooxygenase moxY.